Consider the following 395-residue polypeptide: Hdr-like menaquinol oxidoreductase integral membrane subunit (395 aa).

10 helical membrane passes run 15–35 (YFAL…AYVL), 57–77 (IPYF…AGVF), 88–108 (IAAY…ALDI), 126–146 (IFSW…IYLL), 158–178 (FMAG…GAIY), 196–216 (FIVC…YFTF), 231–251 (LALI…VEGL), 274–294 (VFWS…IIVL), 305–325 (ITFA…YLII), and 364–384 (IGLI…FALI).

It belongs to the NrfD family. Consists of five subunits: an integral membrane subunit, a cytochrome b-like subunit, a cytochrome c subunit and two iron-sulfur subunits.

It is found in the cell membrane. Functionally, has menaquinol-oxidizing activity. HmeB subunit may function as a menaquinol-oxidizing site. HmeA, HmeB and HmeE subunits may together catalyze electron transfer from menaquinol to cytochrome c. The polypeptide is Hdr-like menaquinol oxidoreductase integral membrane subunit (hmeB) (Archaeoglobus fulgidus (strain ATCC 49558 / DSM 4304 / JCM 9628 / NBRC 100126 / VC-16)).